The primary structure comprises 549 residues: Probable protein kinase UbiB (549 aa).

Residues 123 to 501 form the Protein kinase domain; the sequence is NFDDTPLASA…QQKAHKSNYL (379 aa). ATP contacts are provided by residues 129-137 and Lys-152; that span reads LASASISQV. Asp-287 serves as the catalytic Proton acceptor. The next 2 helical transmembrane spans lie at 498 to 518 and 520 to 540; these read SNYLLITSAVLVICGSILFSQ and ATLWASYACIGIGATLWLLGW.

This sequence belongs to the ABC1 family. UbiB subfamily.

It localises to the cell inner membrane. Its pathway is cofactor biosynthesis; ubiquinone biosynthesis [regulation]. Its function is as follows. Is probably a protein kinase regulator of UbiI activity which is involved in aerobic coenzyme Q (ubiquinone) biosynthesis. The protein is Probable protein kinase UbiB of Shewanella loihica (strain ATCC BAA-1088 / PV-4).